We begin with the raw amino-acid sequence, 215 residues long: MTPFTRHTGLVAPLDRANVDTDQIIPKQFLKSIKRTGFGPNLFDEWRYLDIGEPGRDNSTRPLNPEFVLNFPRYQGASVLLARENFGCGSSREHAPWALDEYGFRTVIAPSFADIFYNNSFKNGLLPIVLAEAQVDALFEQCLTTEGYQLTVDLAAQRVRRPDGVEYGFDIDAFRKHCLLNGLDDIGLTLQDADAIGRFEQGHRARQPWLFGALQ.

It belongs to the LeuD family. LeuD type 1 subfamily. As to quaternary structure, heterodimer of LeuC and LeuD.

The enzyme catalyses (2R,3S)-3-isopropylmalate = (2S)-2-isopropylmalate. Its pathway is amino-acid biosynthesis; L-leucine biosynthesis; L-leucine from 3-methyl-2-oxobutanoate: step 2/4. Its function is as follows. Catalyzes the isomerization between 2-isopropylmalate and 3-isopropylmalate, via the formation of 2-isopropylmaleate. This Xanthomonas axonopodis pv. citri (strain 306) protein is 3-isopropylmalate dehydratase small subunit.